The chain runs to 113 residues: Large ribosomal subunit protein P1 (113 aa).

Residues 56–66 show a composition bias toward low complexity; that stretch reads TAAAAPAPAAG. The tract at residues 56–113 is disordered; that stretch reads TAAAAPAPAAGGSAGGEVEAADDDDEEDAEEEAADEGGDDDGDDDEEADGEGLGALFG. Over residues 74–105 the composition is skewed to acidic residues; the sequence is EAADDDDEEDAEEEAADEGGDDDGDDDEEADG.

The protein belongs to the eukaryotic ribosomal protein P1/P2 family. In terms of assembly, part of the 50S ribosomal subunit. Homodimer, it forms part of the ribosomal stalk which helps the ribosome interact with GTP-bound translation factors. Forms a heptameric uL10/P0(P1)2(P1)2(P1)2 complex, where uL10/P0 forms an elongated spine to which the P1 dimers bind in a sequential fashion.

Forms part of the ribosomal stalk, playing a central role in the interaction of the ribosome with GTP-bound translation factors. This is Large ribosomal subunit protein P1 from Haloferax volcanii (strain ATCC 29605 / DSM 3757 / JCM 8879 / NBRC 14742 / NCIMB 2012 / VKM B-1768 / DS2) (Halobacterium volcanii).